Consider the following 316-residue polypeptide: Phospholipase A1 3 (316 aa).

The N-terminal stretch at 1 to 4 is a signal peptide; that stretch reads ADDL. A propeptide spanning residues 5 to 14 is cleaved from the precursor; the sequence is TTLRNGTLDR. A disulfide bridge connects residues Cys-20 and Cys-103. Ser-153 serves as the catalytic Nucleophile. Catalysis depends on Asp-181, which acts as the Charge relay system. Cystine bridges form between Cys-192-Cys-197 and Cys-235-Cys-240. His-242 acts as the Charge relay system in catalysis. Disulfide bonds link Cys-257–Cys-284, Cys-258–Cys-309, and Cys-277–Cys-282.

The protein belongs to the AB hydrolase superfamily. Lipase family. Expressed by the venom gland.

It localises to the secreted. It carries out the reaction a 1,2-diacyl-sn-glycero-3-phosphocholine + H2O = a 2-acyl-sn-glycero-3-phosphocholine + a fatty acid + H(+). Functionally, catalyzes the hydrolysis of phosphatidylcholine with phospholipase A1 activity. May act as an allergen and induce hemolytic activity. The chain is Phospholipase A1 3 from Polistes dominula (European paper wasp).